We begin with the raw amino-acid sequence, 24 residues long: Bombinin (24 aa).

An Asparagine amide modification is found at Asn-24.

It belongs to the bombinin family. Expressed by the skin glands.

It is found in the secreted. Has antimicrobial and hemolytic activities. The polypeptide is Bombinin (Bombina variegata (Yellow-bellied toad)).